The chain runs to 347 residues: Haptoglobin (347 aa).

Positions 1–18 are cleaved as a signal peptide; it reads MRALGAVVALLLCGQLFA. Residues 31–88 enclose the Sushi domain; it reads DSCPKPPEIPKGYVEHMVRYHCQTYYKLRTAGDGVYTLDSNKQWTNKVTGEKLPECEA. Disulfide bonds link cysteine 52–cysteine 86 and cysteine 90–cysteine 207. A Peptidase S1 domain is found at 103–345; sequence IMGGSLDAKG…ILDWIQTTIA (243 aa). 4 N-linked (GlcNAc...) asparagine glycosylation sites follow: asparagine 125, asparagine 151, asparagine 183, and asparagine 232. Cystine bridges form between cysteine 250-cysteine 281 and cysteine 292-cysteine 322. An interaction with CD163 region spans residues 259 to 264; that stretch reads VPEKKT.

The protein belongs to the peptidase S1 family. As to quaternary structure, tetramer of two alpha and two beta chains; disulfide-linked. The hemoglobin/haptoglobin complex is composed of a haptoglobin dimer bound to two hemoglobin alpha-beta dimers. Interacts with CD163. Interacts with ERGIC3. Expressed by the liver and secreted in plasma.

The protein resides in the secreted. In terms of biological role, as a result of hemolysis, hemoglobin is found to accumulate in the kidney and is secreted in the urine. Haptoglobin captures, and combines with free plasma hemoglobin to allow hepatic recycling of heme iron and to prevent kidney damage. Haptoglobin also acts as an antioxidant, has antibacterial activity and plays a role in modulating many aspects of the acute phase response. Hemoglobin/haptoglobin complexes are rapidly cleared by the macrophage CD163 scavenger receptor expressed on the surface of liver Kupfer cells through an endocytic lysosomal degradation pathway. This Sus scrofa (Pig) protein is Haptoglobin (HP).